The chain runs to 232 residues: MLKMEINGGVATPTASAVAKVTETTTPVNSPSPTSSPPPPPSPQQPPQPPVVLSPCAACKILRRRCADKCVLAPYFPPTDPAKFTIAHRVFGASNIIKFLQELPESQRTDAVNSMVYEAGARMRDPVYGCAGAIYHLQRQVSELQAQLAKTQVELVGMQLQRSSLLELIYNMEQTKLSVQEQGQQKMSFESSFESGDEFISSPDEESNDLGFLEDNNNNNNSSMSWWDPLWT.

Residues 1 to 50 (MLKMEINGGVATPTASAVAKVTETTTPVNSPSPTSSPPPPPSPQQPPQPP) form a disordered region. The span at 34 to 50 (TSSPPPPPSPQQPPQPP) shows a compositional bias: pro residues. Positions 54-155 (SPCAACKILR…AQLAKTQVEL (102 aa)) constitute an LOB domain. The disordered stretch occupies residues 181-218 (EQGQQKMSFESSFESGDEFISSPDEESNDLGFLEDNNN). Residues 188–202 (SFESSFESGDEFISS) show a composition bias toward low complexity.

The protein belongs to the LOB domain-containing protein family. As to expression, expressed in young shoots, stems, leaves and flowers.

The sequence is that of LOB domain-containing protein 11 (LBD11) from Arabidopsis thaliana (Mouse-ear cress).